The sequence spans 576 residues: Sulfite reductase [NADPH] hemoprotein beta-component (576 aa).

Residues Cys439, Cys445, Cys485, and Cys489 each coordinate [4Fe-4S] cluster. Cys489 lines the siroheme pocket.

The protein belongs to the nitrite and sulfite reductase 4Fe-4S domain family. Alpha(8)-beta(8). The alpha component is a flavoprotein, the beta component is a hemoprotein. Siroheme serves as cofactor. Requires [4Fe-4S] cluster as cofactor.

It carries out the reaction hydrogen sulfide + 3 NADP(+) + 3 H2O = sulfite + 3 NADPH + 4 H(+). It participates in sulfur metabolism; hydrogen sulfide biosynthesis; hydrogen sulfide from sulfite (NADPH route): step 1/1. In terms of biological role, component of the sulfite reductase complex that catalyzes the 6-electron reduction of sulfite to sulfide. This is one of several activities required for the biosynthesis of L-cysteine from sulfate. The sequence is that of Sulfite reductase [NADPH] hemoprotein beta-component from Aliivibrio salmonicida (strain LFI1238) (Vibrio salmonicida (strain LFI1238)).